The following is a 143-amino-acid chain: uncharacterized protein (143 aa).

This is an uncharacterized protein from Saccharomyces cerevisiae (strain ATCC 204508 / S288c) (Baker's yeast).